A 344-amino-acid chain; its full sequence is Cyclin-G2 (344 aa).

Residues 298–324 are disordered; sequence CFDGSESEDSGEDMSCGEESLSSSPPS. A compositionally biased stretch (acidic residues) spans 302-313; the sequence is SESEDSGEDMSC.

Belongs to the cyclin family. Cyclin G subfamily. As to expression, highest levels in intestine. Intermediate levels in spleen, brain and kidney. Low levels in testis, stomach, pancreas, liver, salivary gland and muscle. According to PubMed:9139721 also abundant in thymus.

It localises to the cytoplasm. It is found in the nucleus. In terms of biological role, may play a role in growth regulation and in negative regulation of cell cycle progression. The chain is Cyclin-G2 (Ccng2) from Mus musculus (Mouse).